The sequence spans 1234 residues: MTQFTTSQQAAITHDGHDVLVSASAGSGKTTVLVERIIQKILKQHADITRMLIVTFTRAATAEMRTKIQTALKKALTERRHELSGEDRRHLANQIAMVNAAKISTLDAFSLQIVQTYYYVIDLDPGFRLLTDETERYMLQERVWDDLREQLYASDEAPAFEQLTANFSGDRDDSGLQDLMFELIRQAGATTDPKAYLEGLATPYAPEKWEATFSQQIWPRVKGQLLQIATSLTQASALANQLPNPIWYQQIQADLAPLQTLLETNAPTYDTVRSVLISHEFAAWSRISKGLDDADKDTKNAAKDLRDAAKKTWQNKLAPTFALAAEQIGDLLREAQPLVATLANVALKFEDALTAEKAARHVQDYSDIAHNALRILQQKDPQTGAPIADNYRASFDEVMVDEYQDISPLQEALLAAVSTTTPGDRFMVGDVKQSIYGFRLADPQLFIHKYQTFQDAPTDPAAPERIILAENFRSTKNVLAFTNLIFSQIMDPEVGDLSYDNAAALRYGALDYGDAHPAVKVLLYSKATSDEDSSDASELPGDADDNEPVDIATGQTQLVLAEIQRLINDPDAQLWDRQAQEYRRIHYRDITLLTRQTSQNSLIQTQFAAAGVPLFVADTKNFFKTTELMVMLALLKVIDNQKQDIPLVAVLRSPIVGLSADQLALIRLAAKQVPYYDAVTAFLQAEPKTPLAQRTHDMLTHFFNQLSHFRDLARENDLVTLLWAIYQDTGFLDYVGGTPGGSQRQANLQALIDRARTYEAGGFKGLFAFIHFITLMQKQDQDLAMPAQVDPDNDAVKLMTIHKSKGLEFPVVFLMQANKHFNMRDQTGTAILTKQGIGIKWLDPETRVEYELPQYQAAKAARQNQTLAEEMRLLYVALTRAQQRLYVVGATMSGNQLTSADKTVEKWAAAAEGEARVLAPQVRSGATSYLDWIGPALIRHPQARGLAETTIKPALVGDETEFTIEIDVNPQVTPTATPEKVSDDSGTMVDLSAWFKKAYPFQAATTTTGFQSVSEIKRAFDDPDTIDLVNADRFLGPKPPMRDLTAPAFLTETPSGISPAAIGTATHLLLQLVDLAKPITMASLRALRDQLTTKQVIAVDVAKHIDLTALIRFFETDLGRLLLAKPQQVHREVPFSMLLPADQVFEALADDPGEDVLIHGIIDGYVSDEQGVTLFDYKTDHNPNTAVLVDRYRGQLNLYAQALQDLQPKPVLHRYLVFLRTGTVVDLVASGAGK.

A UvrD-like helicase ATP-binding domain is found at 2-475; the sequence is TQFTTSQQAA…IILAENFRST (474 aa). 23 to 30 is a binding site for ATP; that stretch reads ASAGSGKT. One can recognise a UvrD-like helicase C-terminal domain in the interval 507 to 806; the sequence is YGALDYGDAH…KLMTIHKSKG (300 aa).

It belongs to the helicase family. AddA subfamily. Heterodimer of AddA and AddB/RexB. Mg(2+) serves as cofactor.

It catalyses the reaction Couples ATP hydrolysis with the unwinding of duplex DNA by translocating in the 3'-5' direction.. The catalysed reaction is ATP + H2O = ADP + phosphate + H(+). In terms of biological role, the heterodimer acts as both an ATP-dependent DNA helicase and an ATP-dependent, dual-direction single-stranded exonuclease. Recognizes the chi site generating a DNA molecule suitable for the initiation of homologous recombination. The AddA nuclease domain is required for chi fragment generation; this subunit has the helicase and 3' -&gt; 5' nuclease activities. In Lacticaseibacillus casei (strain BL23) (Lactobacillus casei), this protein is ATP-dependent helicase/nuclease subunit A.